The sequence spans 544 residues: Chaperonin GroEL 2 (544 aa).

ATP contacts are provided by residues 29–32, 86–90, G413, 479–481, and D495; these read TLGP, DGTTT, and NAA.

This sequence belongs to the chaperonin (HSP60) family. In terms of assembly, forms a cylinder of 14 subunits composed of two heptameric rings stacked back-to-back. Interacts with the co-chaperonin GroES.

It localises to the cytoplasm. It catalyses the reaction ATP + H2O + a folded polypeptide = ADP + phosphate + an unfolded polypeptide.. In terms of biological role, together with its co-chaperonin GroES, plays an essential role in assisting protein folding. The GroEL-GroES system forms a nano-cage that allows encapsulation of the non-native substrate proteins and provides a physical environment optimized to promote and accelerate protein folding. This is Chaperonin GroEL 2 from Prochlorococcus marinus subsp. pastoris (strain CCMP1986 / NIES-2087 / MED4).